Consider the following 110-residue polypeptide: Putative caspase recruitment domain-containing protein 17P (110 aa).

The CARD domain occupies 1–91 (MADKVLKEKR…HLAGTLGLSA (91 aa)).

In terms of assembly, interacts with pro-CASP1. Ubiquitous.

It is found in the cytoplasm. Regulator of procaspase-1/CASP1 activation implicated in the regulation of the proteolytic maturation of pro-IL-1beta/IL1B and its release during inflammation. Inhibits the release of IL1B in response to LPS in monocytes. However, unlike CASP1, do not induce NF-kappa-B activation. This chain is Putative caspase recruitment domain-containing protein 17P (CARD17P), found in Homo sapiens (Human).